The chain runs to 455 residues: Serine incorporator 2 (455 aa).

11 helical membrane-spanning segments follow: residues 5–27 (LGAC…ILCS), 40–57 (LIFT…IIML), 96–118 (AVYR…MLCV), 131–150 (GFWF…AFYI), 160–182 (FYFG…IDFA), 202–224 (YAGL…ALMF), 239–256 (FISL…AAVL), 268–290 (LLQA…SSIP), 317–339 (QWWD…FISL), 385–407 (TYSY…MTLT), and 422–444 (WTAV…WTLV).

It belongs to the TDE1 family.

It is found in the cell membrane. The catalysed reaction is a 1,2-diacyl-sn-glycero-3-phospho-L-serine(in) = a 1,2-diacyl-sn-glycero-3-phospho-L-serine(out). The enzyme catalyses a 1,2-diacyl-sn-glycero-3-phosphocholine(in) = a 1,2-diacyl-sn-glycero-3-phosphocholine(out). It carries out the reaction a 1,2-diacyl-sn-glycero-3-phosphoethanolamine(in) = a 1,2-diacyl-sn-glycero-3-phosphoethanolamine(out). Its function is as follows. Non-ATP-dependent, non-specific lipid transporter for phosphatidylserine, phosphatidylcholine, and phosphatidylethanolamine. Functions as a scramblase that flips lipids in both directions across the membrane. In contrast to SERINC3 and SERINC5, has no effect on HIV-1 particles infectivity. The protein is Serine incorporator 2 of Homo sapiens (Human).